A 1239-amino-acid polypeptide reads, in one-letter code: MDFIPTQTFYGRRWRPAPVQRYIPQPQPPAPPRRRRGPSQLQQLVAALGALALQPKQKQKRAQKKPKKTPPPKPKKTQKPKKPTQKKKSKPGKRMRNCMKIENDCIFPVMLDGKVNGYACLVGDKVMKPAHVKGTIDNPELAKLTFKKSSKYDLECAQVPVCMKSDASKFTHEKPEGHYNWHHGAVQFSNGRFTIPTGSGKPGDSGRPIFDNTGKVVAIVLGGANEGARTALSVVTWNKDMVTRITPEESVEWSAAALNITALCVLQNLSFPCDAPPCAPCCYEKDPAGTLRLLSDHYYHPKYYELLDSTMHCPQGRRPKRSVAHFEAYKATRPYIGWCADCGLAGSCPSPVSIEHVWSDADDGVLKIQVSMQIGIAKSNTINHAKIRYMGANGVQEAERSTLSVSTTAPCDILATMGHFILARCRPGSQVEVSLSTDPKLLCRTPFSHKPRFIGNEKSPAPTGHKTRIPCKTYSHQTDLTREEITMHVPPDVPIQGLVSNTGKSYSLDPKTKTIKYKCTCGETVKEGTATNKITLFNCDTAPKCITYAVDNTVWQYNSQYVPRSEVTEVKGKIHVPFPLTDSTCAVSVAPEPQVTYRLGEVEFHFHPMYPTLFSIRSLGKDPSHSQEWIDTPMSKTIQVGAEGVEYVWGNNNPVRLWAQKSSSSSAHGNPISIVSHYYDLYPYWTITVLASLGLLIVISSGFSCFLCSVARTKCLTPYQLAPGAQLPTFIALLCCAKSARADTLDDFSYLWTNNQAMFWLQLASPVAAFLCLSYCCRNLACCMKIFLGISGLCVIATQAYEHSTTMPNQVGIPFKALIERPGYAGLPLSLVVIKSELVPSLVQDYITCNYKTVVPSPYIKCCGGAECSHKNEADYKCSVFTGVYPFMWGGAYCFCDTENSQMSEVYVTRGESCEADHAIAYQVHTASLKAQVMISIGELNQTVDVFVNGDSPARIQQSKFILGPISSAWSPFDHKVIVYRDEVYNEDYAPYGSGQAGRFGDIQSRTVNSTDVYANTNLKLKRPASGNVHVPYTQTPSGFSYWKKEKGVPLNRNAPFGCIIKVNPVRAENCVYGNIPISMDIADAHFTRIDESPSVSLKACEVQSCTYSSDFGGVASISYTSNKVGKCAIHSHSNSATMKDSVQDVQESGALSLFFATSSVEPNFVVQVCNARITCHGKCEPPKDHIVPYAAKHNDAEFPSISTTAWQWLAHTTSGPLTILVVAIIVVVVVSIVVCARH.

The tract at residues Arg15–Met95 is disordered. Residues Arg36–Ala62 are host transcription inhibition. Over residues Pro38 to Lys56 the composition is skewed to low complexity. The Nuclear localization signal motif lies at Pro55–Pro91. Basic residues predominate over residues Gln57–Met95. The binding to the viral RNA stretch occupies residues Gln78–Ile106. The tract at residues Pro91 to Cys105 is ribosome-binding. A disulfide bridge connects residues Cys105 and Cys120. A Peptidase S3 domain is found at Cys105–Trp253. The Charge relay system role is filled by His131. Residues Ile136–Phe146 carry the Nuclear export signal motif. Residues Lys147–Tyr152 form an interaction with spike glycoprotein E2 region. Asp153 serves as the catalytic Charge relay system. The tract at residues Pro175–Ala185 is dimerization of the capsid protein. Residue Ser205 is the Charge relay system of the active site. The tract at residues Asp211 to Lys215 is dimerization of the capsid protein. The segment at Ser254–Leu269 is functions as an uncleaved signal peptide for the precursor of protein E3/E2. Cystine bridges form between Cys264-Cys273, Cys278-Cys282, Cys281-Cys313, Cys339-Cys443, Cys342-Cys348, Cys411-Cys425, Cys471-Cys585, Cys519-Cys545, and Cys521-Cys539. The N-linked (GlcNAc...) asparagine; by host glycan is linked to Asn268. Residues Ser322–Thr686 are Extracellular-facing. The helical transmembrane segment at Ile687–Leu707 threads the bilayer. Residues Cys705 and Cys708 are each lipidated (S-palmitoyl cysteine; by host). At Cys708 to Leu751 the chain is on the cytoplasmic side. Positions Val710–Lys714 are interaction with the capsid protein. Residues Cys715, Cys735, and Cys736 are each lipidated (S-palmitoyl cysteine; by host). Cys715 and Cys736 form a disulfide bridge. Topologically, residues Trp752 to Gln756 are extracellular. The chain crosses the membrane as a helical span at residues Ala757 to Cys777. Over Arg778–Asn779 the chain is Cytoplasmic. The chain crosses the membrane as a helical span at residues Leu780–Ala800. Over Tyr801–Gly1216 the chain is Extracellular. Disulfide bonds link Cys849-Cys914, Cys862-Cys894, Cys863-Cys896, and Cys868-Cys878. The E1 fusion peptide loop stretch occupies residues Val884–Ser901. Residues Asn941, Asn1009, and Asn1070 are each glycosylated (N-linked (GlcNAc...) asparagine; by host). 4 cysteine pairs are disulfide-bonded: Cys1059–Cys1071, Cys1101–Cys1176, Cys1106–Cys1180, and Cys1128–Cys1170. The helical transmembrane segment at Pro1217 to Ala1237 threads the bilayer. A lipid anchor (S-palmitoyl cysteine; by host) is attached at Cys1236. Topologically, residues Arg1238 to His1239 are cytoplasmic.

In terms of assembly, homodimer. Homomultimer. Interacts with host karyopherin KPNA4; this interaction allows the nuclear import of the viral capsid protein. Interacts with spike glycoprotein E2. Interacts with host IRAK1; the interaction leads to inhibition of IRAK1-dependent signaling. The precursor of protein E3/E2 and E1 form a heterodimer shortly after synthesis. As to quaternary structure, interacts with spike glycoprotein E1. The precursor of protein E3/E2 and E1 form a heterodimer shortly after synthesis. Processing of the precursor of protein E3/E2 into E2 and E3 results in a heterodimer of the spike glycoproteins E2 and E1. Spike at virion surface are constituted of a trimer of E2-E1 heterodimers. After target cell attachment and endocytosis, E1 change conformation to form homotrimers. Interacts with 6K protein. In terms of assembly, interacts with spike glycoprotein E1. Processing of the precursor of protein E3/E2 into E2 and E3 results in a heterodimer of the spike glycoproteins E2 and E1. Spike at virion surface are constituted of a trimer of E2-E1 heterodimers. Interacts with 6K protein. Interacts with host MXRA8; this interaction mediates virus entry. Interacts with the capsid protein. Oligomer. Interacts with spike glycoprotein E1. Interacts with spike glycoprotein E2. Structural polyprotein: Specific enzymatic cleavages in vivo yield mature proteins. Capsid protein is auto-cleaved during polyprotein translation, unmasking a signal peptide at the N-terminus of the precursor of E3/E2. The remaining polyprotein is then targeted to the host endoplasmic reticulum, where host signal peptidase cleaves it into pE2, 6K and E1 proteins. pE2 is further processed to mature E3 and E2 by host furin in trans-Golgi vesicle. Post-translationally, palmitoylated via thioester bonds. These palmitoylations may induce disruption of the C-terminus transmembrane. This would result in the reorientation of E2 C-terminus from lumenal to cytoplasmic side. In terms of processing, N-glycosylated. Palmitoylated via thioester bonds.

It is found in the virion. Its subcellular location is the host cytoplasm. It localises to the host cell membrane. The protein localises to the host nucleus. The protein resides in the virion membrane. It is found in the host Golgi apparatus. Its subcellular location is the host trans-Golgi network. It localises to the host endoplasmic reticulum. The catalysed reaction is Autocatalytic release of the core protein from the N-terminus of the togavirus structural polyprotein by hydrolysis of a -Trp-|-Ser- bond.. Functionally, forms an icosahedral capsid with a T=4 symmetry composed of 240 copies of the capsid protein surrounded by a lipid membrane through which penetrate 80 spikes composed of trimers of E1-E2 heterodimers. The capsid protein binds to the viral RNA genome at a site adjacent to a ribosome binding site for viral genome translation following genome release. Possesses a protease activity that results in its autocatalytic cleavage from the nascent structural protein. Following its self-cleavage, the capsid protein transiently associates with ribosomes, and within several minutes the protein binds to viral RNA and rapidly assembles into icosahedric core particles. The resulting nucleocapsid eventually associates with the cytoplasmic domain of the spike glycoprotein E2 at the cell membrane, leading to budding and formation of mature virions. In case of infection, new virions attach to target cells and after clathrin-mediated endocytosis their membrane fuses with the host endosomal membrane. This leads to the release of the nucleocapsid into the cytoplasm, followed by an uncoating event necessary for the genomic RNA to become accessible. The uncoating might be triggered by the interaction of capsid proteins with ribosomes. Binding of ribosomes would release the genomic RNA since the same region is genomic RNA-binding and ribosome-binding. Specifically inhibits interleukin-1 receptor-associated kinase 1/IRAK1-dependent signaling during viral entry, representing a means by which the alphaviruses may evade innate immune detection and activation prior to viral gene expression. Provides the signal sequence for the translocation of the precursor of protein E3/E2 to the host endoplasmic reticulum. Furin-cleaved E3 remains associated with spike glycoprotein E1 and mediates pH protection of the latter during the transport via the secretory pathway. After virion release from the host cell, the assembly protein E3 is gradually released in the extracellular space. Its function is as follows. Plays a role in viral attachment to target host cell, by binding to the cell receptor MXRA8. Synthesized as a p62 precursor which is processed by furin at the cell membrane just before virion budding, giving rise to E2-E1 heterodimer. The p62-E1 heterodimer is stable, whereas E2-E1 is unstable and dissociate at low pH. p62 is processed at the last step, presumably to avoid E1 fusion activation before its final export to cell surface. E2 C-terminus contains a transitory transmembrane that would be disrupted by palmitoylation, resulting in reorientation of the C-terminal tail from lumenal to cytoplasmic side. This step is critical since E2 C-terminus is involved in budding by interacting with capsid proteins. This release of E2 C-terminus in cytoplasm occurs lately in protein export, and precludes premature assembly of particles at the endoplasmic reticulum membrane. In terms of biological role, acts as a viroporin that participates in virus glycoprotein processing and transport to the plasma membrane, cell permeabilization and budding of viral particles. The cation channel is permeable to Na(+)&gt;K(+)&gt;Ca(2+) in vitro. Disrupts the calcium homeostasis of the cell, probably at the endoplasmic reticulum level. This leads to cytoplasmic calcium elevation. Because of its lipophilic properties, the 6K protein is postulated to influence the selection of lipids that interact with the transmembrane domains of the glycoproteins, which, in turn, affects the deformability of the bilayer required for the extreme curvature that occurs as budding proceeds. Present in low amount in virions, about 3% compared to viral glycoproteins. Functionally, class II viral fusion protein. Fusion activity is inactive as long as E1 is bound to E2 in mature virion. After virus attachment to target cell via host MXRA8 and endocytosis, acidification of the endosome induce dissociation of E1/E2 heterodimer and concomitant trimerization of the E1 subunits. This E1 trimer is fusion active, and promotes release of viral nucleocapsid in cytoplasm after endosome and viral membrane fusion. Efficient fusion requires the presence of cholesterol and sphingolipid in the target membrane. The polypeptide is Structural polyprotein (Anopheles amictus (Common banded mosquito)).